The chain runs to 249 residues: Purine nucleoside phosphorylase ML0918 (249 aa).

Residues H72, C109, and H126 each coordinate Zn(2+).

The protein belongs to the purine nucleoside phosphorylase YfiH/LACC1 family. In terms of assembly, homodimer. The cofactor is Cu(2+). Requires Zn(2+) as cofactor.

It carries out the reaction adenosine + phosphate = alpha-D-ribose 1-phosphate + adenine. The enzyme catalyses S-methyl-5'-thioadenosine + phosphate = 5-(methylsulfanyl)-alpha-D-ribose 1-phosphate + adenine. The catalysed reaction is inosine + phosphate = alpha-D-ribose 1-phosphate + hypoxanthine. It catalyses the reaction adenosine + H2O + H(+) = inosine + NH4(+). Purine nucleoside enzyme that catalyzes the phosphorolysis of adenosine and inosine nucleosides, yielding D-ribose 1-phosphate and the respective free bases, adenine and hypoxanthine. Also catalyzes the phosphorolysis of S-methyl-5'-thioadenosine into adenine and S-methyl-5-thio-alpha-D-ribose 1-phosphate. Also has adenosine deaminase activity. This Mycobacterium leprae (strain TN) protein is Purine nucleoside phosphorylase ML0918.